Consider the following 397-residue polypeptide: Class V chitinase CHIT5 (397 aa).

A signal peptide spans 1–18; sequence MIIKLLVALIHYLHETMA. One can recognise a GH18 domain in the interval 54–397; the sequence is GVRAAYWPAW…SKQASNAWGY (344 aa). 2 N-linked (GlcNAc...) asparagine glycosylation sites follow: asparagine 128 and asparagine 147. Glutamate 166 acts as the Proton donor in catalysis. N-linked (GlcNAc...) asparagine glycosylation is found at asparagine 193, asparagine 209, asparagine 247, and asparagine 261.

The protein belongs to the glycosyl hydrolase 18 family. Chitinase class V subfamily.

It carries out the reaction Random endo-hydrolysis of N-acetyl-beta-D-glucosaminide (1-&gt;4)-beta-linkages in chitin and chitodextrins.. It participates in glycan degradation; chitin degradation. Possesses chitinase activity in vitro toward glycol chitin, carboxymethyl-chitin, colloidal chitin, and the chitin oligosaccharides (N-acetylglucosamine) (GlcNAc)6 and (GlcNAc)5. Hydrolyzes (GlcNAc)6 into (GlcNAc)4 and (GlcNAc)2, or two (GlcNAc)3 molecules. Has the capacity to inhibit hyphal growth of the fungus Trichoderma viride in an agar-plate bioassay. Involved in symbiotic signaling. Required for root hair infection threads (ITs) elongation and nodule development. Possesses Nod factor (NF) hydrolase activity. NFs are lipo-chitooligosaccharide signaling molecules produced by nitrogen-fixing rhizobia to initiate nodulation (symbiosis) on the roots of legumes. Modulates NF levels and signaling to complete transition of infected nodules to functional nitrogen-fixing organs. This Lotus japonicus (Lotus corniculatus var. japonicus) protein is Class V chitinase CHIT5.